Consider the following 123-residue polypeptide: Putative EG45-like domain containing protein 1 (123 aa).

The first 21 residues, 1-21 (MSKSIVFFSTVLVFLFSFSYA), serve as a signal peptide directing secretion. The Expansin-like EG45 domain maps to 24-123 (GIATFYTSYT…AGIINIDYFP (100 aa)).

The protein resides in the secreted. Its function is as follows. Might have a systemic role in water and solute homeostasis. This Arabidopsis thaliana (Mouse-ear cress) protein is Putative EG45-like domain containing protein 1 (EGC1).